A 511-amino-acid polypeptide reads, in one-letter code: Mesoderm induction early response protein 1 (511 aa).

A compositionally biased stretch (low complexity) spans 1-16 (MAEPSVESSSPGGSAT). The segment at 1-171 (MAEPSVESSS…EEESEEDEDY (171 aa)) is disordered. Serine 10 carries the phosphoserine modification. The span at 17 to 36 (SEDHEFDPSADMLVHDFDDE) shows a compositional bias: basic and acidic residues. A compositionally biased stretch (acidic residues) spans 37–46 (RTLEEEEMME). The span at 57-66 (DLAREGDMPI) shows a compositional bias: basic and acidic residues. Positions 83–104 (EEEEEEEEEEEGEDDEDADNDD) are enriched in acidic residues. A compositionally biased stretch (polar residues) spans 128-143 (QSSNDDPSQSVTSQDA). Serine 140 carries the phosphoserine modification. Tyrosine 154 carries the post-translational modification Phosphotyrosine. A phosphoserine mark is found at serine 159 and serine 165. Over residues 159 to 171 (SEIEEESEEDEDY) the composition is skewed to acidic residues. Residues 179 to 277 (KEIMVGSMFQ…EALRRLRFNV (99 aa)) form the ELM2 domain. Lysine 238 participates in a covalent cross-link: Glycyl lysine isopeptide (Lys-Gly) (interchain with G-Cter in SUMO2). Residues 282–334 (EELSVWTEEECRNFEQGLKAYGKDFHLIQANKVRTRSVGECVAFYYMWKKSER) form the SANT domain. The interval 365–511 (ESESAASSRA…KFEEHENTND (147 aa)) is disordered. 3 positions are modified to phosphoserine: serine 366, serine 368, and serine 376. Residues 397–408 (SSRNQNGVSSNG) are compositionally biased toward polar residues. Composition is skewed to basic and acidic residues over residues 413–422 (LNKEEVKVEG) and 461–474 (ARNE…NERP). Residue lysine 419 forms a Glycyl lysine isopeptide (Lys-Gly) (interchain with G-Cter in SUMO2) linkage. Positions 481–493 (NSSGKESPGSSEF) are enriched in polar residues. A phosphoserine mark is found at serine 482, serine 487, and serine 490. Over residues 499–511 (SHGKFEEHENTND) the composition is skewed to basic and acidic residues.

In terms of assembly, interacts with HDAC1. Part of a complex containing at least CDYL, MIER1, MIER2, HDAC1 and HDAC2. In terms of tissue distribution, ubiquitously expressed. Isoform 1 is only expressed in testis.

It is found in the nucleus. Its function is as follows. Transcriptional repressor regulating the expression of a number of genes including SP1 target genes. Probably functions through recruitment of HDAC1 a histone deacetylase involved in chromatin silencing. The polypeptide is Mesoderm induction early response protein 1 (Mier1) (Mus musculus (Mouse)).